A 770-amino-acid chain; its full sequence is Transducin-like enhancer protein 1 (770 aa).

The q domain stretch occupies residues 1 to 131 (MFPQSRHPTP…IIGQQQLQAQ (131 aa)). Disordered regions lie at residues 128 to 157 (LQAQHLSHGHGPPVPLTPHPSGLQPPGIPP) and 176 to 348 (HLAI…PAID). A GP domain region spans residues 132–199 (HLSHGHGPPV…HHRDREPGTS (68 aa)). Composition is skewed to basic and acidic residues over residues 178-196 (AIKDDKKHHDAEHHRDREP) and 209-246 (RGTDKRRNGPEFSNDIKKRKVDDKDSSHYDSDGDKSDD). Positions 200-268 (NSLLVPDSLR…SPRASPAHSP (69 aa)) are ccN domain. Positions 225–228 (KKRK) match the Nuclear localization signal motif. A Phosphoserine modification is found at Ser-239. Over residues 257–266 (PSSPRASPAH) the composition is skewed to low complexity. A phosphoserine; by CDK1 mark is found at Ser-259, Ser-263, and Ser-267. Over residues 267–283 (SPRENGIDKNRLLKKDA) the composition is skewed to basic and acidic residues. Residues 269–450 (RENGIDKNRL…GGKPAYSFHV (182 aa)) form an SP domain region. The segment covering 284 to 298 (SSSPASTASSASSTS) has biased composition (low complexity). Position 286 is a phosphoserine (Ser-286). The span at 300–310 (KSKEMSLHEKA) shows a compositional bias: basic and acidic residues. WD repeat units lie at residues 470-501 (GIPRHARQINTLNHGEVVCAVTISNPTRHVYT), 528-558 (NRDNYIRSCKLLPDGCTLIVGGEASTLSIWD), 572-602 (SSAPACYALAISPDSKVCFSCCSDGNIAVWD), 614-644 (GHTDGASCIDISNDGTKLWTGGLDNTVRSWD), 696-726 (LHESCVLSLKFAYCGKWFVSTGKDNLLNAWR), and 737-767 (KESSSVLSCDISVDDKYIVTGSGDKKATVYE).

It belongs to the WD repeat Groucho/TLE family. In terms of assembly, homooligomer and heterooligomer with other family members. Binds RUNX1, RUNX3, FOXA2, KDM6A, UTY, histone H3, HESX1, ESRRG and the NF-kappa-B subunit RELA. Interacts with HES1 (via WRPW motif). Binds TCF7, LEF1, TCF7L1 and TCF7L2. Interacts with SIX3. Interacts with EFNB1. Interacts with TLE4. Interacts with FOXG1/BF-1; the interaction is inhibited by TLE6/GRG6. Phosphorylated, probably by CDK1. The degree of phosphorylation varies throughout the cell cycle, and is highest at the G2/M transition. Becomes hyperphosphorylated in response to cell differentiation and interaction with HES1 or RUNX1. In terms of processing, ubiquitinated by XIAP/BIRC4. As to expression, in all tissues examined, mostly in brain, liver and muscle.

Its subcellular location is the nucleus. Functionally, transcriptional corepressor that binds to a number of transcription factors. Inhibits NF-kappa-B-regulated gene expression. Inhibits the transcriptional activation mediated by FOXA2, and by CTNNB1 and TCF family members in Wnt signaling. Enhances FOXG1/BF-1- and HES1-mediated transcriptional repression. The effects of full-length TLE family members may be modulated by association with dominant-negative AES. Unusual function as coactivator for ESRRG. This Homo sapiens (Human) protein is Transducin-like enhancer protein 1 (TLE1).